Here is a 236-residue protein sequence, read N- to C-terminus: 2,3,4,5-tetrahydropyridine-2,6-dicarboxylate N-acetyltransferase (236 aa).

This sequence belongs to the transferase hexapeptide repeat family. DapH subfamily.

The catalysed reaction is (S)-2,3,4,5-tetrahydrodipicolinate + acetyl-CoA + H2O = L-2-acetamido-6-oxoheptanedioate + CoA. The protein operates within amino-acid biosynthesis; L-lysine biosynthesis via DAP pathway; LL-2,6-diaminopimelate from (S)-tetrahydrodipicolinate (acetylase route): step 1/3. Its function is as follows. Catalyzes the transfer of an acetyl group from acetyl-CoA to tetrahydrodipicolinate. The chain is 2,3,4,5-tetrahydropyridine-2,6-dicarboxylate N-acetyltransferase from Clostridium botulinum (strain Kyoto / Type A2).